Consider the following 819-residue polypeptide: MNSDQDVALKLAQERAEIVAKYDRGREGAEIEPWEDADYLVYKVTDRFGFLHEEELPYHNAAADRQKQLEIERTSKWLKMLKKWERYKNTEKFHRRIYKGIPLQLRGEVWALLLEIPKMKEETRDLYSKLKHRARGCSPDIRQIDLDVNRTFRDHIMFRDRYGVKQQSLFHVLAAYSIYNTEVGYCQGMSQITALLLMYMNEEDAFWALVKLFSGPKHAMHGFFVQGFPKLLRFQEHHEKILNKFLSKLKQHLDSQEIYTSFYTMKWFFQCFLDRTPFRLNLRIWDIYIFEGERVLTAMSYTILKLHKKHLMKLSMEELVEFLQETLAKDFFFEDDFVIEQLQVSMAELKRAKLDLPEPGKEDEYPKKPLGQLPPESACVNHLSNGQRSVGRPSPKTSSRREDGSPRKNHEHSPVHHSRNGTPERAGQSRRKSVDEGSKNLKHEAESQRKPSPGMQDSSRHYNHAAANQNSNAISNVRKEFMPKWRKPSDASAIERTTKYAVEGKSHSALPALPVAIPGSAETRLPNSRQKMKALDGGEGKRGSNASQYDNVPGGESEHGASAEEGPERTHPHSPRKHPEPSPSPPKVPNKFTFKVQPPSHVRYPPQLPEEDHRAAYPPSYSNPPVYHGNSPKHVPTAHSGFVSTQISPRPQINPSRRPYGSSLSVDTSPEKAYSRPTPVVLPSSRIEVLPIDMGARGYGSSGSPKNGQFILPPVDYLPENRKWSEVSYTYRPEMHGQSWTRDAHRSHLSNLPNYAAFQHIPFQAHGLPEVSVDSPVRYKMSAAVEDASPPGYPYAGPSPSAHHYRNGEGLSVQESVLL.

Met1 is subject to N-acetylmethionine. The Rab-GAP TBC domain occupies 100–292 (GIPLQLRGEV…RIWDIYIFEG (193 aa)). Positions 355-367 (DLPEPGKEDEYPK) are enriched in basic and acidic residues. 2 disordered regions span residues 355-498 (DLPE…ERTT) and 513-678 (LPVA…SRPT). Phosphoserine occurs at positions 389, 394, and 398. Composition is skewed to basic and acidic residues over residues 399–414 (SRRE…EHSP) and 432–449 (KSVD…ESQR). Residues 464-476 (HAAANQNSNAISN) are compositionally biased toward low complexity. Composition is skewed to basic and acidic residues over residues 477 to 489 (VRKE…RKPS) and 533 to 542 (KALDGGEGKR). Residues Ser544 and Ser547 each carry the phosphoserine modification. Over residues 556–571 (ESEHGASAEEGPERTH) the composition is skewed to basic and acidic residues. 7 positions are modified to phosphoserine: Ser574, Ser631, Ser644, Ser648, Ser665, Ser669, and Ser704. The segment covering 642–655 (FVSTQISPRPQINP) has biased composition (polar residues). Tyr717 is modified (phosphotyrosine). Residues 788–802 (ASPPGYPYAGPSPSA) are compositionally biased toward low complexity. The segment at 788–807 (ASPPGYPYAGPSPSAHHYRN) is disordered.

As to quaternary structure, interacts with EPS8.

It localises to the golgi apparatus. It is found in the cytoplasmic vesicle. Functionally, acts as a GTPase-activating protein for RAB5A and RAB43. Involved in receptor trafficking. In complex with EPS8 inhibits internalization of EGFR. Involved in retrograde transport from the endocytic pathway to the Golgi apparatus. Involved in the transport of Shiga toxin from early and recycling endosomes to the trans-Golgi network. Required for structural integrity of the Golgi complex. The polypeptide is USP6 N-terminal-like protein (Usp6nl) (Mus musculus (Mouse)).